The chain runs to 155 residues: Transcription antitermination protein NusB (155 aa).

It belongs to the NusB family.

In terms of biological role, involved in transcription antitermination. Required for transcription of ribosomal RNA (rRNA) genes. Binds specifically to the boxA antiterminator sequence of the ribosomal RNA (rrn) operons. The chain is Transcription antitermination protein NusB from Vibrio atlanticus (strain LGP32) (Vibrio splendidus (strain Mel32)).